A 97-amino-acid polypeptide reads, in one-letter code: Cobalt transport protein CbiN (97 aa).

The next 2 helical transmembrane spans lie at valine 6 to leucine 26 and serine 68 to tyrosine 88.

It belongs to the CbiN family. In terms of assembly, forms an energy-coupling factor (ECF) transporter complex composed of an ATP-binding protein (A component, CbiO), a transmembrane protein (T component, CbiQ) and 2 possible substrate-capture proteins (S components, CbiM and CbiN) of unknown stoichimetry.

Its subcellular location is the cell membrane. It participates in cofactor biosynthesis; adenosylcobalamin biosynthesis. Functionally, part of the energy-coupling factor (ECF) transporter complex CbiMNOQ involved in cobalt import. This Methanococcus maripaludis (strain C5 / ATCC BAA-1333) protein is Cobalt transport protein CbiN.